The primary structure comprises 216 residues: Peptide methionine sulfoxide reductase MsrA (216 aa).

Cys57 is a catalytic residue.

It belongs to the MsrA Met sulfoxide reductase family.

It carries out the reaction L-methionyl-[protein] + [thioredoxin]-disulfide + H2O = L-methionyl-(S)-S-oxide-[protein] + [thioredoxin]-dithiol. The enzyme catalyses [thioredoxin]-disulfide + L-methionine + H2O = L-methionine (S)-S-oxide + [thioredoxin]-dithiol. Functionally, has an important function as a repair enzyme for proteins that have been inactivated by oxidation. Catalyzes the reversible oxidation-reduction of methionine sulfoxide in proteins to methionine. In Agrobacterium fabrum (strain C58 / ATCC 33970) (Agrobacterium tumefaciens (strain C58)), this protein is Peptide methionine sulfoxide reductase MsrA.